The following is a 264-amino-acid chain: Thiazole synthase (264 aa).

K106 acts as the Schiff-base intermediate with DXP in catalysis. 1-deoxy-D-xylulose 5-phosphate-binding positions include G167, 193–194, and 215–216; these read AG and NT.

It belongs to the ThiG family. In terms of assembly, homotetramer. Forms heterodimers with either ThiH or ThiS.

It localises to the cytoplasm. The catalysed reaction is [ThiS sulfur-carrier protein]-C-terminal-Gly-aminoethanethioate + 2-iminoacetate + 1-deoxy-D-xylulose 5-phosphate = [ThiS sulfur-carrier protein]-C-terminal Gly-Gly + 2-[(2R,5Z)-2-carboxy-4-methylthiazol-5(2H)-ylidene]ethyl phosphate + 2 H2O + H(+). It functions in the pathway cofactor biosynthesis; thiamine diphosphate biosynthesis. Catalyzes the rearrangement of 1-deoxy-D-xylulose 5-phosphate (DXP) to produce the thiazole phosphate moiety of thiamine. Sulfur is provided by the thiocarboxylate moiety of the carrier protein ThiS. In vitro, sulfur can be provided by H(2)S. The sequence is that of Thiazole synthase from Xanthomonas campestris pv. campestris (strain 8004).